The primary structure comprises 7913 residues: Nonribosomal peptide synthetase dtxS1 (7913 aa).

The segment at Phe263–Arg662 is adenylation 1. In terms of domain architecture, Carrier 1 spans Gln789 to Thr865. An O-(pantetheine 4'-phosphoryl)serine modification is found at Ser826. The segment at Gln903–Leu1171 is condensation 1. An adenylation 2 region spans residues Leu1332–Arg1740. Positions Gln1865–Gly1941 constitute a Carrier 2 domain. Ser1902 is modified (O-(pantetheine 4'-phosphoryl)serine). The segment at Pro1965–Ser2249 is condensation 2. The segment at Leu2863–Arg3255 is adenylation 3. Residues Gln3380–Leu3456 enclose the Carrier 3 domain. Residue Ser3417 is modified to O-(pantetheine 4'-phosphoryl)serine. Positions Asp3496–Leu3761 are condensation 3. The segment at Asp3924–Arg4321 is adenylation 4. Residues Glu4439–Pro4450 show a composition bias toward polar residues. The segment at Glu4439–Glu4459 is disordered. The 77-residue stretch at Gln4453 to Gly4529 folds into the Carrier 4 domain. Ser4490 carries the O-(pantetheine 4'-phosphoryl)serine modification. The condensation 4 stretch occupies residues Gln4545–Ile4837. An adenylation 5 region spans residues Phe5006–Arg5405. The region spanning Gln5933–Lys6009 is the Carrier 5 domain. Ser5970 is modified (O-(pantetheine 4'-phosphoryl)serine). The condensation 5 stretch occupies residues Val6023 to Val6315. An adenylation 6 region spans residues Phe6481–Asn6766. Residues Gln7394 to Glu7470 form the Carrier 6 domain. Ser7431 bears the O-(pantetheine 4'-phosphoryl)serine mark. The condensation 6 stretch occupies residues Glu7501–Asn7771.

Belongs to the NRP synthetase family.

It participates in secondary metabolite biosynthesis. Nonribosomal peptide synthetase; part of the gene cluster that mediates the biosynthesis of destruxins, insecticidal cyclic hexadepsipeptides which induce flaccid paralysis and visceral muscle contraction in insects through targeting the calcium channels and vacuolar-type ATPases. The aldo-keto reductase dtxS3 converts alpha-ketoisocaproic acid from deaminated leucine into alpha-hydroxyisocaproic acid (HIC), which is the first substrate for destruxin assembly by dtxS1. L-aspartate decarboxylase dtxS4 converts aspartic acid into beta-alanine, the last substrate for the destruxin assembly line performed by dtxS1. The nonribosomal peptide synthetase dtxS1 synthesizes destruxins B and B2, whereas the cytochrome P450 monooxygenase dtxS2 is required to convert destruxin B into other destruxin derivatives, including destructins C, D, A and E. Destruxin E-diol (ED) is further produced in a non-enzymatic manner from destruxin E. Destruxins play an important role in virulence and escape from insect host immune defenses. The sequence is that of Nonribosomal peptide synthetase dtxS1 from Metarhizium robertsii (strain ARSEF 23 / ATCC MYA-3075) (Metarhizium anisopliae (strain ARSEF 23)).